The following is a 1013-amino-acid chain: Sodium/potassium-transporting ATPase subunit alpha-3 (1013 aa).

Residues 1-24 (MGDKKDDKDSPKKNKGKERRDLDD) are disordered. The Cytoplasmic portion of the chain corresponds to 1-77 (MGDKKDDKDS…NALTPPPTTP (77 aa)). Phosphoserine occurs at positions 37 and 56. The interval 72–74 (PPP) is interaction with phosphoinositide-3 kinase. A helical membrane pass occupies residues 78–98 (EWVKFCRQLFGGFSILLWIGA). Over 99–121 (ILCFLAYGIQAGTEDDPSGDNLY) the chain is Extracellular. The helical transmembrane segment at 122 to 142 (LGIVLAAVVIITGCFSYYQEA) threads the bilayer. Topologically, residues 143 to 278 (KSSKIMESFK…VGKTPIAIEI (136 aa)) are cytoplasmic. A phosphoserine mark is found at S218 and S265. The chain crosses the membrane as a helical span at residues 279–298 (EHFIQLITGVAVFLGVSFFI). Residues 299 to 310 (LSLILGYTWLEA) are Extracellular-facing. The helical transmembrane segment at 311–328 (VIFLIGIIVANVPEGLLA) threads the bilayer. The Cytoplasmic segment spans residues 329-762 (TVTVCLTLTA…EEGRLIFDNL (434 aa)). Residue D366 is the 4-aspartylphosphate intermediate of the active site. Residue S442 is modified to Phosphoserine. The residue at position 548 (Y548) is a Phosphotyrosine. Residues D707 and D711 each contribute to the Mg(2+) site. A helical membrane pass occupies residues 763–782 (KKSIAYTLTSNIPEITPFLL). The Extracellular portion of the chain corresponds to 783–792 (FIMANIPLPL). A helical transmembrane segment spans residues 793–813 (GTITILCIDLGTDMVPAISLA). At 814–833 (YEAAESDIMKRQPRNPRTDK) the chain is on the cytoplasmic side. Residues 834-856 (LVNERLISMAYGQIGMIQALGGF) form a helical membrane-spanning segment. The Extracellular portion of the chain corresponds to 857–908 (FSYFVILAENGFLPGNLVGIRLNWDDRTVNDLEDSYGQQWTYEQRKVVEFTC). A helical membrane pass occupies residues 909-928 (HTAFFVSIVVVQWADLIICK). Topologically, residues 929-941 (TRRNSVFQQGMKN) are cytoplasmic. A Phosphoserine; by PKA modification is found at S933. Residues 942-960 (KILIFGLFEETALAAFLSY) form a helical membrane-spanning segment. Residues 961–975 (CPGMDVALRMYPLKP) are Extracellular-facing. Residues 976-996 (SWWFCAFPYSFLIFVYDEIRK) traverse the membrane as a helical segment. The Cytoplasmic portion of the chain corresponds to 997–1013 (LILRRNPGGWVEKETYY).

It belongs to the cation transport ATPase (P-type) (TC 3.A.3) family. Type IIC subfamily. In terms of assembly, the sodium/potassium-transporting ATPase is composed of a catalytic alpha subunit, an auxiliary non-catalytic beta subunit and an additional regulatory subunit. Interacts with regulatory subunit FXYD1.

The protein resides in the cell membrane. It catalyses the reaction K(+)(out) + Na(+)(in) + ATP + H2O = K(+)(in) + Na(+)(out) + ADP + phosphate + H(+). In terms of biological role, this is the catalytic component of the active enzyme, which catalyzes the hydrolysis of ATP coupled with the exchange of sodium and potassium ions across the plasma membrane. This action creates the electrochemical gradient of sodium and potassium ions, providing the energy for active transport of various nutrients. This chain is Sodium/potassium-transporting ATPase subunit alpha-3 (ATP1A3), found in Homo sapiens (Human).